The primary structure comprises 466 residues: Gamma-aminobutyric acid receptor subunit gamma-2 (466 aa).

A signal peptide spans 1–38; sequence MSSPNTWSTGSTVYSPVFSQKMTLWILLLLSLYPGFTS. Topologically, residues 39-274 are extracellular; the sequence is QKSDDDYEDY…FDLSRRMGYF (236 aa). N-linked (GlcNAc...) asparagine glycosylation is found at Asn51 and Asn128. Cys189 and Cys203 are disulfide-bonded. Asn246 carries N-linked (GlcNAc...) asparagine glycosylation. Residues 275–295 form a helical membrane-spanning segment; the sequence is TIQTYIPCTLIVVLSWVSFWI. Residues 296 to 301 are Cytoplasmic-facing; sequence NKDAVP. The chain crosses the membrane as a helical span at residues 302-321; sequence ARTSLGITTVLTMTTLSTIA. The Extracellular portion of the chain corresponds to 322–333; the sequence is RKSLPKVSYVTA. The chain crosses the membrane as a helical span at residues 334 to 358; the sequence is MDLFVSVCFIFVFSALVEYGTLHYF. Residues 359-442 lie on the Cytoplasmic side of the membrane; sequence VSNRKPSKDK…IHIRIAKMDS (84 aa). A helical transmembrane segment spans residues 443–463; sequence YARIFFPTAFCLFNLVYWVSY. Topologically, residues 464–466 are extracellular; the sequence is LYL.

It belongs to the ligand-gated ion channel (TC 1.A.9) family. Gamma-aminobutyric acid receptor (TC 1.A.9.5) subfamily. GABRG2 sub-subfamily. As to quaternary structure, heteropentamer, formed by a combination of alpha (GABRA1-6), beta (GABRB1-3), gamma (GABRG1-3), delta (GABRD), epsilon (GABRE), rho (GABRR1-3), pi (GABRP) and theta (GABRQ) chains, each subunit exhibiting distinct physiological and pharmacological properties. Interacts with GABARAP. Interacts with KIF21B. Identified in a complex of 720 kDa composed of LHFPL4, NLGN2, GABRA1, GABRB2, GABRG2 and GABRB3. Interacts with LHFPL4. Interacts with SHISA7; interaction leads to the regulation of GABA(A) receptor trafficking, channel deactivation kinetics and pharmacology. Post-translationally, palmitoylated by ZDHHC3/GODZ; required for the accumulation of GABA(A) receptors at the postsynaptic membrane of inhibitory GABAergic synapses. In terms of processing, glycosylated. As to expression, expressed in brain (at protein level). Expressed in lungs, in alveolar epithelium.

The protein resides in the postsynaptic cell membrane. It is found in the cell membrane. Its subcellular location is the cell projection. The protein localises to the dendrite. It localises to the cytoplasmic vesicle membrane. The enzyme catalyses chloride(in) = chloride(out). Allosterically activated by benzodiazepines. Activated by pentobarbital. Inhibited by the antagonist bicuculline. Inhibited by zinc ions. Potentiated by histamine. Functionally, gamma subunit of the heteropentameric ligand-gated chloride channel gated by gamma-aminobutyric acid (GABA), a major inhibitory neurotransmitter in the brain. GABA-gated chloride channels, also named GABA(A) receptors (GABAAR), consist of five subunits arranged around a central pore and contain GABA active binding site(s) located at the alpha and beta subunit interface(s). When activated by GABA, GABAARs selectively allow the flow of chloride anions across the cell membrane down their electrochemical gradient. Gamma-2/GABRG2-containing GABAARs are found at both synaptic and extrasynaptic sites. Chloride influx into the postsynaptic neuron following GABAAR opening decreases the neuron ability to generate a new action potential, thereby reducing nerve transmission. GABAARs containing alpha-1 and beta-2 or -3 subunits exhibit synaptogenic activity; the gamma-2 subunit being necessary but not sufficient to induce rapid synaptic contacts formation. Extrasynaptic gamma-2-containing receptors contribute to the tonic GABAergic inhibition. GABAARs function also as histamine receptor where histamine binds at the interface of two neighboring beta subunits and potentiates GABA response in a gamma-2 subunit-controlled manner. The chain is Gamma-aminobutyric acid receptor subunit gamma-2 from Rattus norvegicus (Rat).